Here is a 242-residue protein sequence, read N- to C-terminus: MPRGFTWLRYLGIFLGVALGNEPLEMWPLTQNEECTVTGFLRDKLQYRSRLQYMKHYFPINYKISVPYEGVFRIANVTRLQRAQVSERELRYLWVLVSLSATESVQDVLLEGHPSWKYLQEVETLLLNVQQGLTDVEVSPKVESVLSLLNAPGPNLKLVRPKALLDNCFRVMELLYCSCCKQSSVLNWQDCEVPSPQSCSPEPSLQYAATQLYPPPPWSPSSPPHSTGSVRPVRAQGEGLLP.

The N-terminal stretch at 1–20 is a signal peptide; it reads MPRGFTWLRYLGIFLGVALG. A glycan (N-linked (GlcNAc...) asparagine) is linked at Asn76. Residues 210-242 are disordered; it reads TQLYPPPPWSPSSPPHSTGSVRPVRAQGEGLLP. Over residues 213-223 the composition is skewed to pro residues; that stretch reads YPPPPWSPSSP.

This sequence belongs to the IL-34 family. In terms of assembly, homodimer. Interacts with CSF1R. Detected in the sinusoidal epithelium in the red pulp of spleen (at protein level). Predominantly expressed in spleen. Also detected in a range of other tissues including heart, brain, lung, liver, kidney, thymus, testis, ovary, small intestine, prostate and colon.

It localises to the secreted. Functionally, cytokine that promotes the proliferation, survival and differentiation of monocytes and macrophages. Promotes the release of pro-inflammatory chemokines, and thereby plays an important role in innate immunity and in inflammatory processes. Plays an important role in the regulation of osteoclast proliferation and differentiation, and in the regulation of bone resorption. Signaling via CSF1R and its downstream effectors stimulates phosphorylation of MAPK1/ERK2 AND MAPK3/ERK1. This is Interleukin-34 (IL34) from Homo sapiens (Human).